We begin with the raw amino-acid sequence, 322 residues long: Acetyl-coenzyme A carboxylase carboxyl transferase subunit alpha (322 aa).

In terms of domain architecture, CoA carboxyltransferase C-terminal spans 30-293 (AVDISAEILR…KKALQDSLKL (264 aa)).

The protein belongs to the AccA family. Acetyl-CoA carboxylase is a heterohexamer composed of biotin carboxyl carrier protein (AccB), biotin carboxylase (AccC) and two subunits each of ACCase subunit alpha (AccA) and ACCase subunit beta (AccD).

The protein localises to the cytoplasm. The enzyme catalyses N(6)-carboxybiotinyl-L-lysyl-[protein] + acetyl-CoA = N(6)-biotinyl-L-lysyl-[protein] + malonyl-CoA. The protein operates within lipid metabolism; malonyl-CoA biosynthesis; malonyl-CoA from acetyl-CoA: step 1/1. Its function is as follows. Component of the acetyl coenzyme A carboxylase (ACC) complex. First, biotin carboxylase catalyzes the carboxylation of biotin on its carrier protein (BCCP) and then the CO(2) group is transferred by the carboxyltransferase to acetyl-CoA to form malonyl-CoA. The chain is Acetyl-coenzyme A carboxylase carboxyl transferase subunit alpha from Nitrosospira multiformis (strain ATCC 25196 / NCIMB 11849 / C 71).